The primary structure comprises 436 residues: Adenylosuccinate synthetase (436 aa).

GTP is bound by residues 13–19 and 41–43; these read GDEGKGK and GHT. The active-site Proton acceptor is the Asp14. Mg(2+) is bound by residues Asp14 and Gly41. IMP-binding positions include 14 to 17, 39 to 42, Thr130, Arg144, Gln225, Thr240, and Arg304; these read DEGK and NAGH. His42 (proton donor) is an active-site residue. 300-306 serves as a coordination point for substrate; sequence ATTGRSR. Residues Arg306, 332-334, and 415-417 contribute to the GTP site; these read KLD and STG.

This sequence belongs to the adenylosuccinate synthetase family. As to quaternary structure, homodimer. It depends on Mg(2+) as a cofactor.

The protein resides in the cytoplasm. The catalysed reaction is IMP + L-aspartate + GTP = N(6)-(1,2-dicarboxyethyl)-AMP + GDP + phosphate + 2 H(+). Its pathway is purine metabolism; AMP biosynthesis via de novo pathway; AMP from IMP: step 1/2. In terms of biological role, plays an important role in the de novo pathway of purine nucleotide biosynthesis. Catalyzes the first committed step in the biosynthesis of AMP from IMP. The sequence is that of Adenylosuccinate synthetase from Hamiltonella defensa subsp. Acyrthosiphon pisum (strain 5AT).